The sequence spans 439 residues: Glutamine synthetase (439 aa).

A GS beta-grasp domain is found at 12–93; that stretch reads SKIKFVQLVF…VYGFIYKDNK (82 aa). The 341-residue stretch at 99–439 folds into the GS catalytic domain; that stretch reads PRGILKRALE…EWELERYFFL (341 aa). 2 residues coordinate Mg(2+): E122 and E124. E172 is an ATP binding site. Mg(2+)-binding residues include E177 and E184. G229 contributes to the L-glutamate binding site. H233 contributes to the Mg(2+) binding site. ATP is bound by residues 235–237 and S237; that span reads HIS. The L-glutamate site is built by R283, E289, and R301. Positions 301, 306, and 313 each coordinate ATP. Residue E318 participates in Mg(2+) binding. R320 lines the L-glutamate pocket.

It belongs to the glutamine synthetase family. As to quaternary structure, oligomer of 12 subunits arranged in the form of two hexagons. Mg(2+) is required as a cofactor.

It is found in the cytoplasm. The enzyme catalyses L-glutamate + NH4(+) + ATP = L-glutamine + ADP + phosphate + H(+). Probably involved in nitrogen metabolism via ammonium assimilation. Catalyzes the ATP-dependent biosynthesis of glutamine from glutamate and ammonia. The polypeptide is Glutamine synthetase (Pyrococcus woesei).